Consider the following 204-residue polypeptide: MAEDTYSHKMVKTNHRRCRTKFTEEQLKILINTFNQKPYPGYATKQKLALEINTEESRIQIWFQNRRARHGFQKRPEAETLESSQSQGQDQPGVEFQSREARRCRTTYSASQLHTLIKAFMKNPYPGIDSREELAKEIGVPESRVQIWFQNRRSRLLLQRKREPVASLEQEEQGKIPEGLQGAEDTQNGTNFTSDSHFSGARTW.

Residues 15-74 (HRRCRTKFTEEQLKILINTFNQKPYPGYATKQKLALEINTEESRIQIWFQNRRARHGFQK) constitute a DNA-binding region (homeobox 1). Disordered stretches follow at residues 73 to 101 (QKRP…SREA) and 163 to 204 (EPVA…ARTW). Positions 81 to 90 (LESSQSQGQD) are enriched in polar residues. A DNA-binding region (homeobox 2) is located at residues 101-160 (ARRCRTTYSASQLHTLIKAFMKNPYPGIDSREELAKEIGVPESRVQIWFQNRRSRLLLQR). The span at 184 to 197 (EDTQNGTNFTSDSH) shows a compositional bias: polar residues.

This sequence belongs to the paired homeobox family. In terms of tissue distribution, expressed in embryonic stem cells.

It localises to the nucleus. Functionally, transcription factor that acts as a repressor. This chain is Double homeobox protein A, found in Homo sapiens (Human).